The sequence spans 102 residues: MAVQQKIRIKLKSYDHSLVDKWAVKIIDVVKQTDAIIFGPIPLPTKTHVYTVNRSPHVDKKSREQFSFSSHKRLIEIIPTGRTIDMLMKLELPSGVDVEIKS.

The protein belongs to the universal ribosomal protein uS10 family. In terms of assembly, part of the 30S ribosomal subunit.

Involved in the binding of tRNA to the ribosomes. The chain is Small ribosomal subunit protein uS10 from Chlorobium phaeobacteroides (strain BS1).